The primary structure comprises 3132 residues: Toxin CdiA (3132 aa).

The signal signal peptide spans 1–32 (MHQPPVRFTYRLLSYLVSAIIAGQPLLPAVGA). Residues 36-322 (PQNGAGMDKA…AGGNLSVTGT (287 aa)) form a two-partner system transport domain (TPS) region. The tract at residues 351 to 1378 (GELTAGQNAM…ITMNTAHLLN (1028 aa)) is FHA-1. The interval 1379–1635 (SWDAISASHE…LSLSGASVSS (257 aa)) is receptor-binding domain (RBD). A YP domain region spans residues 1636 to 1820 (YPLPSGNNGY…LSPEDITLHN (185 aa)). Positions 1821–1859 (GSVISGNNVQLAGGNITNSGSSINAQNDLLLDRTGSIDN) are periplasmic FHA-1 repeat (pFR). The FHA-2 stretch occupies residues 1930-2526 (RATDSLFMGA…QDSDRYDSRQ (597 aa)). Disordered stretches follow at residues 2195-2228 (TGTGGIGFTTGSSKTTHDRREAGTTQSQSASTIG) and 2456-2497 (AGIN…SGAQ). Composition is skewed to polar residues over residues 2217 to 2228 (GTTQSQSASTIG) and 2483 to 2497 (VSLTSGRDTTLSGAQ). Residues 2862–2904 (DNLSEQERQQISMLATIASGIAGGLVGNSTSAAGTGAQAGRNS) form a pre-toxin (PT) domain region. The VENN CT cleavage motif motif lies at 2905–2908 (VENN). Residues 2909–3121 (AMSGLEGFGT…IGTVTDYQIE (213 aa)) form a C-terminal effector domain (CT) region.

The protein in the N-terminal section; belongs to the CdiA toxin family. Probably interacts with cognate immunity protein CdiI. Expressed as 303 kDa protein which can be processed to 284 kDa and 195 kDa forms.

It is found in the secreted. It localises to the target cell. The protein localises to the target cell cytoplasm. Functionally, toxic component of a toxin-immunity protein module, which functions as a cellular contact-dependent growth inhibition (CDI) system. CDI modules allow bacteria to communicate with and inhibit the growth of closely related neighboring bacteria (target cell counts decrease 1000- to 10(5)-fold) in a contact-dependent fashion. Inhibitory cells must be in logarithmic (not stationary) phase to inhibit growth of their targets, but protein synthesis is not necessary. The presence of P or S but not type 1 pili protects the target cells against growth inhibition for this CDI. BamA on the outer membrane of target cells acts as a receptor for CdiA, while target cell multidrug efflux pump AcrB facilitates its transport into the cytoplasm. Outer membrane receptor function is dependent on extracellular loops of BamA. Cells undergoing CDI show a 2- to 5-fold reversible decrease in aerobic respiration, proton motive force and steady-state ATP levels, suggesting this CT module is an ionophore that disrupts the target cell's inner cell membrane. Growth recovery requires an energy source. Cells expressing this protein in the absence of CdiI initially form filaments, some of which contain multiple nucleoids, while others are devoid of nucleoids. CDI cells induce the phage shock response, but pspA is not required for recovery from CDI. CDI is neutralized by its cognate immunity protein CdiI, but not by non-cognate CdiI from other bacteria with different CDI systems. Plays a role in biofilm formation, a region N-terminal to residue 644 is implicated in this receptor-independent cell adhesion. The CdiA protein is thought to be exported from the cell through the central lumen of CdiB, the other half of its two-partner system (TPS). The TPS domain probably remains associated with CdiB while the FHA-1 domain forms an extended filament (33 nm long) with the receptor-binding domain (RBD) at its extremity; in the secretion arrested state the C-terminus of the RBD and YP domains form a hairpin-like structure as the FHA-2, PT and CT domains are periplasmic. The YP domain is probably responsible for this arrest at the point where it re-enters the host cell periplasm. Upon binding to a target cell outer membrane receptor (BamA for this CDI) a signal is transmitted to activate secretion. The filament becomes about 5 nm longer, the rest of CdiA is secreted and the FHA-2 domain becomes stably associated with the target cell's outer membrane where it facilitates entry of the toxic CT domain into the target cell periplasm. From there the toxic CT domain is cleaved and gains access to the target cell cytoplasm via an inner membrane protein (multidrug efflux pump AcrB for this CDI). The sequence is that of Toxin CdiA from Escherichia coli.